The chain runs to 101 residues: Chaperone modulatory protein CbpM (101 aa).

It belongs to the CbpM family.

Functionally, interacts with CbpA and inhibits both the DnaJ-like co-chaperone activity and the DNA binding activity of CbpA. Together with CbpA, modulates the activity of the DnaK chaperone system. Does not inhibit the co-chaperone activity of DnaJ. This Salmonella paratyphi A (strain ATCC 9150 / SARB42) protein is Chaperone modulatory protein CbpM.